Reading from the N-terminus, the 295-residue chain is Ethanolamine ammonia-lyase small subunit (295 aa).

Residues Val207, Glu228, and Cys258 each coordinate adenosylcob(III)alamin.

Belongs to the EutC family. The basic unit is a heterodimer which dimerizes to form tetramers. The heterotetramers trimerize; 6 large subunits form a core ring with 6 small subunits projecting outwards. It depends on adenosylcob(III)alamin as a cofactor.

It localises to the bacterial microcompartment. The catalysed reaction is ethanolamine = acetaldehyde + NH4(+). It participates in amine and polyamine degradation; ethanolamine degradation. Its function is as follows. Catalyzes the deamination of various vicinal amino-alcohols to oxo compounds. Allows this organism to utilize ethanolamine as the sole source of nitrogen and carbon in the presence of external vitamin B12. This is Ethanolamine ammonia-lyase small subunit from Escherichia coli (strain SE11).